A 67-amino-acid polypeptide reads, in one-letter code: Large ribosomal subunit protein bL35 (67 aa).

The segment at 1–20 is disordered; that stretch reads MPKLKTKSGAKKRFVPKKSG.

This sequence belongs to the bacterial ribosomal protein bL35 family.

In Anaeromyxobacter dehalogenans (strain 2CP-C), this protein is Large ribosomal subunit protein bL35.